A 478-amino-acid chain; its full sequence is Protein trichome birefringence-like 20 (478 aa).

A helical; Signal-anchor for type II membrane protein membrane pass occupies residues 10-30; sequence IGLVIFPLILLTIAPILYLFF. A compositionally biased stretch (low complexity) spans 50-68; that stretch reads SSAISSPSRYNHSSSSSDS. Residues 50–125 form a disordered region; it reads SSAISSPSRY…KEHRRKKRKR (76 aa). A compositionally biased stretch (polar residues) spans 92-110; the sequence is SSSLHNNDRLSISSSNGHH. Over residues 112-125 the composition is skewed to basic residues; the sequence is VTPKKEHRRKKRKR. The short motif at 200–202 is the GDS motif element; it reads GDS. Positions 447–461 match the DCXHWCLPGXXDXWN motif motif; it reads DCVHWCLPGPIDSWN.

This sequence belongs to the PC-esterase family. TBL subfamily.

It is found in the membrane. May act as a bridging protein that binds pectin and other cell wall polysaccharides. Probably involved in maintaining esterification of pectins. May be involved in the specific O-acetylation of cell wall polymers. This chain is Protein trichome birefringence-like 20 (TBL20), found in Arabidopsis thaliana (Mouse-ear cress).